Here is a 768-residue protein sequence, read N- to C-terminus: DNA ligase 1 (768 aa).

Residues 42–139 (VEVSQSSSDS…KEPPLESNAR (98 aa)) are disordered. The segment covering 52–99 (KNVDGRSTSEKRKVESVKLVDESKHNNHDDTGTQNVERENNIVSEAKK) has biased composition (basic and acidic residues). The segment covering 104 to 124 (GSSSSSSDAVSSNNDSGASTP) has biased composition (low complexity). The segment at 309–318 (KLRLQLAEKT) is interaction with target DNA. Glu414 serves as a coordination point for ATP. Lys416 functions as the N6-AMP-lysine intermediate in the catalytic mechanism. Residues Arg421 and Arg437 each coordinate ATP. Glu469 is a Mg(2+) binding site. The interval 490–492 (KRK) is interaction with target DNA. A Mg(2+)-binding site is contributed by Glu568. Residues Lys573, Arg587, and Lys593 each coordinate ATP.

Belongs to the ATP-dependent DNA ligase family. Mg(2+) is required as a cofactor.

The protein localises to the nucleus. The catalysed reaction is ATP + (deoxyribonucleotide)n-3'-hydroxyl + 5'-phospho-(deoxyribonucleotide)m = (deoxyribonucleotide)n+m + AMP + diphosphate.. Functionally, DNA ligase that seals nicks in double-stranded DNA during DNA replication, DNA recombination and DNA repair. The sequence is that of DNA ligase 1 (cdc17) from Schizosaccharomyces pombe (strain 972 / ATCC 24843) (Fission yeast).